We begin with the raw amino-acid sequence, 638 residues long: DNA gyrase subunit B (638 aa).

In terms of domain architecture, Toprim spans 423 to 537 (CEVYIVEGDS…KGHVYLAMPP (115 aa)). Mg(2+)-binding residues include Glu429, Asp502, and Asp504.

The protein belongs to the type II topoisomerase GyrB family. As to quaternary structure, heterotetramer, composed of two GyrA and two GyrB chains. In the heterotetramer, GyrA contains the active site tyrosine that forms a transient covalent intermediate with DNA, while GyrB binds cofactors and catalyzes ATP hydrolysis. Mg(2+) is required as a cofactor. It depends on Mn(2+) as a cofactor. The cofactor is Ca(2+).

The protein localises to the cytoplasm. The enzyme catalyses ATP-dependent breakage, passage and rejoining of double-stranded DNA.. Its function is as follows. A type II topoisomerase that negatively supercoils closed circular double-stranded (ds) DNA in an ATP-dependent manner to modulate DNA topology and maintain chromosomes in an underwound state. Negative supercoiling favors strand separation, and DNA replication, transcription, recombination and repair, all of which involve strand separation. Also able to catalyze the interconversion of other topological isomers of dsDNA rings, including catenanes and knotted rings. Type II topoisomerases break and join 2 DNA strands simultaneously in an ATP-dependent manner. This chain is DNA gyrase subunit B, found in Treponema denticola (strain ATCC 35405 / DSM 14222 / CIP 103919 / JCM 8153 / KCTC 15104).